The sequence spans 437 residues: GTPase Obg (437 aa).

Residues 2 to 160 form the Obg domain; sequence SMFLDTAKIS…RQLELELKIL (159 aa). The OBG-type G domain occupies 161–338; sequence ADVGLVGFPS…LLEATAELLA (178 aa). GTP is bound by residues 167 to 174, 192 to 196, 214 to 217, 284 to 287, and 319 to 321; these read GFPSVGKS, FTTIV, DLPG, NKMD, and SSL. The Mg(2+) site is built by S174 and T194. The 79-residue stretch at 359 to 437 folds into the OCT domain; that stretch reads GFAEAEKEFE…IGKFEFEFVD (79 aa).

It belongs to the TRAFAC class OBG-HflX-like GTPase superfamily. OBG GTPase family. In terms of assembly, monomer. The cofactor is Mg(2+).

It is found in the cytoplasm. Its function is as follows. An essential GTPase which binds GTP, GDP and possibly (p)ppGpp with moderate affinity, with high nucleotide exchange rates and a fairly low GTP hydrolysis rate. Plays a role in control of the cell cycle, stress response, ribosome biogenesis and in those bacteria that undergo differentiation, in morphogenesis control. In Streptococcus pyogenes serotype M28 (strain MGAS6180), this protein is GTPase Obg.